Consider the following 316-residue polypeptide: Cell surface superoxide dismutase [Cu-Zn] 6 (316 aa).

A signal peptide spans 1–18 (MIFIPIIILIYLVSIAAS). H78, H80, and H96 together coordinate Cu cation. Zn(2+) is bound by residues H96 and D119. N-linked (GlcNAc...) asparagine glycosylation occurs at N128. H159 contributes to the Cu cation binding site. N-linked (GlcNAc...) asparagine glycosylation is found at N162 and N240. Positions 243-263 (DNVYSPEETRPSDQNKKSHRH) are disordered. Positions 249-258 (EETRPSDQNK) are enriched in basic and acidic residues. N-linked (GlcNAc...) asparagine glycans are attached at residues N278 and N281. A lipid anchor (GPI-anchor amidated serine) is attached at S288. Residues 289–316 (SDCLNDGMMVTGSVFGSLVLGIAAGIFV) constitute a propeptide, removed in mature form.

Belongs to the Cu-Zn superoxide dismutase family. It depends on Cu cation as a cofactor. The cofactor is Zn(2+). The GPI-anchor is attached to the protein in the endoplasmic reticulum and serves to target the protein to the cell surface. There, the glucosamine-inositol phospholipid moiety is cleaved off and the GPI-modified mannoprotein is covalently attached via its lipidless GPI glycan remnant to the 1,6-beta-glucan of the outer cell wall layer.

The protein resides in the secreted. The protein localises to the cell wall. It is found in the membrane. It catalyses the reaction 2 superoxide + 2 H(+) = H2O2 + O2. Functionally, superoxide dismutases serve to convert damaging superoxide radicals, a key form of ROS, to less damaging hydrogen peroxide that can be converted into water by catalase action. May be involved protection against extracellular stress. This Candida albicans (strain SC5314 / ATCC MYA-2876) (Yeast) protein is Cell surface superoxide dismutase [Cu-Zn] 6 (SOD6).